Reading from the N-terminus, the 265-residue chain is Exosome complex component RRP42 (265 aa).

The protein belongs to the RNase PH family. Component of the RNA exosome complex. Specifically part of the catalytically inactive RNA exosome core complex (Exo-9) which may associate with the catalytic subunits RRP6 and DIS3 in cytoplasmic- and nuclear-specific RNA exosome complex forms. Exo-9 is formed by a hexameric base ring of RNase PH domain-containing subunits and a cap ring consisting of CSL4, RRP4 and RRP40.

It localises to the cytoplasm. The protein resides in the nucleus. It is found in the nucleolus. In terms of biological role, non-catalytic component of the RNA exosome complex which has 3'-&gt;5' exoribonuclease activity and participates in a multitude of cellular RNA processing and degradation events. In the nucleus, the RNA exosome complex is involved in proper maturation of stable RNA species such as rRNA, snRNA and snoRNA, in the elimination of RNA processing by-products and non-coding 'pervasive' transcripts, such as antisense RNA species and cryptic unstable transcripts (CUTs), and of mRNAs with processing defects, thereby limiting or excluding their export to the cytoplasm. In the cytoplasm, the RNA exosome complex is involved in general mRNA turnover and in RNA surveillance pathways, preventing translation of aberrant mRNAs. The catalytic inactive RNA exosome core complex of 9 subunits (Exo-9) is proposed to play a pivotal role in the binding and presentation of RNA for ribonucleolysis, and to serve as a scaffold for the association with catalytic subunits and accessory proteins or complexes. RRP42 is part of the hexameric ring of RNase PH domain-containing subunits proposed to form a central channel which threads RNA substrates for degradation. The chain is Exosome complex component RRP42 (RRP42) from Saccharomyces cerevisiae (strain ATCC 204508 / S288c) (Baker's yeast).